The primary structure comprises 359 residues: WD repeat-containing protein 89 homolog (359 aa).

6 WD repeats span residues 23-62 (IGDDTCYVLDLSVTPNLLAAAGSNYLIKIYDRSNNTILNV), 65-104 (GHKDAINETKFIENTNTLLSCSSDKTVKIWDTKTGQCSQT), 106-144 (NQQGEIFSIDLNGDILAMGVGSMVVLYNLSTKKMIRKFD), 146-186 (SHTE…DDDA), 192-232 (NAED…KIKH), and 294-333 (VHTDVIRNVFWDKFKSELITSSEDSKIGFWTNNPSITNIL).

The chain is WD repeat-containing protein 89 homolog (wdr89) from Dictyostelium discoideum (Social amoeba).